A 98-amino-acid polypeptide reads, in one-letter code: DNA-binding protein Fis (98 aa).

Residues 74–93 (QTRAALMMGINRGTLRKKLK) constitute a DNA-binding region (H-T-H motif).

This sequence belongs to the transcriptional regulatory Fis family. In terms of assembly, homodimer.

Functionally, activates ribosomal RNA transcription. Plays a direct role in upstream activation of rRNA promoters. This Yersinia enterocolitica serotype O:8 / biotype 1B (strain NCTC 13174 / 8081) protein is DNA-binding protein Fis.